Consider the following 214-residue polypeptide: C-type lectin domain family 2 member L (214 aa).

The segment at 1–56 (MEPAREPPSRARPPPPLAARPAPAPAAPRPRSPAEAEARGPEGLLRRSGSGYEGST) is disordered. A compositionally biased stretch (pro residues) spans 10–31 (RARPPPPLAARPAPAPAAPRPR). S32 carries the phosphoserine modification. The chain crosses the membrane as a helical span at residues 69 to 89 (LLLGAIAVLLFAILVVMSILA). Residues 107-209 (YGRKCYFFSE…CLMTRPWVCS (103 aa)) form the C-type lectin domain. 2 disulfide bridges follow: C128–C208 and C187–C200.

It localises to the membrane. This Homo sapiens (Human) protein is C-type lectin domain family 2 member L (CLEC2L).